A 450-amino-acid chain; its full sequence is Bifunctional protein GlmU (450 aa).

The segment at 1–229 (MRRHAIILAA…VEEIMGVNDR (229 aa)) is pyrophosphorylase. UDP-N-acetyl-alpha-D-glucosamine contacts are provided by residues 8 to 11 (LAAG), Lys22, Gln72, and 77 to 78 (GT). Asp102 contributes to the Mg(2+) binding site. UDP-N-acetyl-alpha-D-glucosamine contacts are provided by Gly139, Glu154, and Asn227. Mg(2+) is bound at residue Asn227. The segment at 230 to 250 (VMLSQAEKAMQRRTNHYHMLN) is linker. Positions 251 to 450 (GVTIIDPDST…RQTTKEGYRK (200 aa)) are N-acetyltransferase. Positions 332 and 350 each coordinate UDP-N-acetyl-alpha-D-glucosamine. His362 serves as the catalytic Proton acceptor. 2 residues coordinate UDP-N-acetyl-alpha-D-glucosamine: Tyr365 and Asn376. Residues 385 to 386 (NY), Ala422, and Arg439 each bind acetyl-CoA.

The protein in the N-terminal section; belongs to the N-acetylglucosamine-1-phosphate uridyltransferase family. This sequence in the C-terminal section; belongs to the transferase hexapeptide repeat family. Homotrimer. Mg(2+) serves as cofactor.

It localises to the cytoplasm. The catalysed reaction is alpha-D-glucosamine 1-phosphate + acetyl-CoA = N-acetyl-alpha-D-glucosamine 1-phosphate + CoA + H(+). The enzyme catalyses N-acetyl-alpha-D-glucosamine 1-phosphate + UTP + H(+) = UDP-N-acetyl-alpha-D-glucosamine + diphosphate. The protein operates within nucleotide-sugar biosynthesis; UDP-N-acetyl-alpha-D-glucosamine biosynthesis; N-acetyl-alpha-D-glucosamine 1-phosphate from alpha-D-glucosamine 6-phosphate (route II): step 2/2. Its pathway is nucleotide-sugar biosynthesis; UDP-N-acetyl-alpha-D-glucosamine biosynthesis; UDP-N-acetyl-alpha-D-glucosamine from N-acetyl-alpha-D-glucosamine 1-phosphate: step 1/1. It participates in bacterial outer membrane biogenesis; LPS lipid A biosynthesis. Its function is as follows. Catalyzes the last two sequential reactions in the de novo biosynthetic pathway for UDP-N-acetylglucosamine (UDP-GlcNAc). The C-terminal domain catalyzes the transfer of acetyl group from acetyl coenzyme A to glucosamine-1-phosphate (GlcN-1-P) to produce N-acetylglucosamine-1-phosphate (GlcNAc-1-P), which is converted into UDP-GlcNAc by the transfer of uridine 5-monophosphate (from uridine 5-triphosphate), a reaction catalyzed by the N-terminal domain. The sequence is that of Bifunctional protein GlmU from Staphylococcus aureus (strain NCTC 8325 / PS 47).